The following is a 257-amino-acid chain: HTH-type transcriptional activator mta (257 aa).

Positions 2-71 constitute an HTH merR-type domain; sequence KYQVKQVAEI…LDEIKEMLDH (70 aa). A DNA-binding region (H-T-H motif) is located at residues 5–24; that stretch reads VKQVAEISGVSIRTLHHYDN. The hinge stretch occupies residues 71–74; it reads HPNF. An essential for dimerization region spans residues 76–104; the sequence is RKAALQSQKEILMKKKQRMDEMIQTIDRT. Residues 76–107 adopt a coiled-coil conformation; the sequence is RKAALQSQKEILMKKKQRMDEMIQTIDRTLLS.

As to quaternary structure, homodimer.

It is found in the cytoplasm. In terms of biological role, global transcriptional regulator that activates transcription of bmr and blt by binding directly to their promoter. Also stimulates the expression of the mta gene itself, ydfK and ymfE. This chain is HTH-type transcriptional activator mta (mta), found in Bacillus subtilis (strain 168).